We begin with the raw amino-acid sequence, 506 residues long: Histidine ammonia-lyase (506 aa).

A cross-link (5-imidazolinone (Ala-Gly)) is located at residues A142 to G144. Position 143 is a 2,3-didehydroalanine (Ser) (S143).

It belongs to the PAL/histidase family. Contains an active site 4-methylidene-imidazol-5-one (MIO), which is formed autocatalytically by cyclization and dehydration of residues Ala-Ser-Gly.

It is found in the cytoplasm. The enzyme catalyses L-histidine = trans-urocanate + NH4(+). It functions in the pathway amino-acid degradation; L-histidine degradation into L-glutamate; N-formimidoyl-L-glutamate from L-histidine: step 1/3. The protein is Histidine ammonia-lyase of Bacillus cereus (strain ATCC 14579 / DSM 31 / CCUG 7414 / JCM 2152 / NBRC 15305 / NCIMB 9373 / NCTC 2599 / NRRL B-3711).